Reading from the N-terminus, the 136-residue chain is UPF0299 membrane protein PM0880 (136 aa).

A run of 4 helical transmembrane segments spans residues 5–25, 29–49, 67–87, and 92–112; these read IVDLARSCGILYLMLFIGEWI, LNIGIPASIWGLLLLFLGLTF, YMALLFVPVSVGVIKYADVLF, and VLLLPNIVSTFLTLIVVGLLS.

The protein belongs to the UPF0299 family.

It is found in the cell inner membrane. The chain is UPF0299 membrane protein PM0880 from Pasteurella multocida (strain Pm70).